The following is a 526-amino-acid chain: Medium/long-chain-fatty-acid--[acyl-carrier-protein] ligase MbtM (526 aa).

2 positions are modified to N6-acetyllysine; by Pat: Lys-260 and Lys-511.

Belongs to the ATP-dependent AMP-binding enzyme family. Post-translationally, acetylated on Lys-511 and Lys-260 by Pat. Lys-511 is the major acetylation site. Acetylation results in the inactivation of the enzyme.

It carries out the reaction a long-chain fatty acid + holo-[ACP] + ATP = a long-chain fatty acyl-[ACP] + AMP + diphosphate. The enzyme catalyses a medium-chain fatty acid + holo-[ACP] + ATP = a medium-chain fatty acyl-[ACP] + AMP + diphosphate. It catalyses the reaction hexadecanoate + holo-[ACP] + ATP = hexadecanoyl-[ACP] + AMP + diphosphate. The catalysed reaction is hexadecanoate + ATP + H(+) = hexadecanoyl-AMP + diphosphate. It carries out the reaction hexadecanoyl-AMP + holo-[ACP] = hexadecanoyl-[ACP] + AMP + H(+). The enzyme catalyses dodecanoate + holo-[ACP] + ATP = dodecanoyl-[ACP] + AMP + diphosphate. It catalyses the reaction dodecanoate + ATP + H(+) = dodecanoyl-AMP + diphosphate. The catalysed reaction is dodecanoyl-AMP + holo-[ACP] = dodecanoyl-[ACP] + AMP + H(+). Its pathway is siderophore biosynthesis; mycobactin biosynthesis. Its activity is regulated as follows. Reversibly inactivated by post-translational acetylation by Pat in a cAMP-dependent manner and reactivated by Sir2 deacylase. In terms of biological role, activates lipidic moieties required for mycobactin biosynthesis. Converts medium- to long-chain aliphatic fatty acids into acyl adenylate, which is further transferred on to the phosphopantetheine arm of the carrier protein MbtL. Shows a strong preference for palmitic acid (C16) and cannot use short-chain fatty acids. Proceeds via a Bi Uni Uni Bi ping-pong mechanism. During the first half-reaction (adenylation), fatty acid binds first to the free enzyme, followed by ATP and the release of pyrophosphate to form the adenylate intermediate. During the second half-reaction (ligation), holo-MbtL binds to the enzyme followed by the release of products AMP and acylated MbtL. The polypeptide is Medium/long-chain-fatty-acid--[acyl-carrier-protein] ligase MbtM (Mycolicibacterium smegmatis (strain ATCC 700084 / mc(2)155) (Mycobacterium smegmatis)).